The sequence spans 176 residues: Large ribosomal subunit protein uL10 (176 aa).

This sequence belongs to the universal ribosomal protein uL10 family. In terms of assembly, part of the ribosomal stalk of the 50S ribosomal subunit. The N-terminus interacts with L11 and the large rRNA to form the base of the stalk. The C-terminus forms an elongated spine to which L12 dimers bind in a sequential fashion forming a multimeric L10(L12)X complex.

Its function is as follows. Forms part of the ribosomal stalk, playing a central role in the interaction of the ribosome with GTP-bound translation factors. This is Large ribosomal subunit protein uL10 from Hahella chejuensis (strain KCTC 2396).